A 132-amino-acid chain; its full sequence is Small ribosomal subunit protein uS8 (132 aa).

This sequence belongs to the universal ribosomal protein uS8 family. As to quaternary structure, part of the 30S ribosomal subunit. Contacts proteins S5 and S12.

In terms of biological role, one of the primary rRNA binding proteins, it binds directly to 16S rRNA central domain where it helps coordinate assembly of the platform of the 30S subunit. In Rhodopseudomonas palustris (strain HaA2), this protein is Small ribosomal subunit protein uS8.